A 217-amino-acid chain; its full sequence is Large ribosomal subunit protein uL3 (217 aa).

Gln-154 carries the post-translational modification N5-methylglutamine.

This sequence belongs to the universal ribosomal protein uL3 family. In terms of assembly, part of the 50S ribosomal subunit. Forms a cluster with proteins L14 and L19. Methylated by PrmB.

Functionally, one of the primary rRNA binding proteins, it binds directly near the 3'-end of the 23S rRNA, where it nucleates assembly of the 50S subunit. The polypeptide is Large ribosomal subunit protein uL3 (Burkholderia ambifaria (strain ATCC BAA-244 / DSM 16087 / CCUG 44356 / LMG 19182 / AMMD) (Burkholderia cepacia (strain AMMD))).